The following is a 219-amino-acid chain: Elongation factor Ts, chloroplastic (219 aa).

It belongs to the EF-Ts family.

The protein localises to the plastid. It localises to the chloroplast. In terms of biological role, associates with the EF-Tu.GDP complex and induces the exchange of GDP to GTP. It remains bound to the aminoacyl-tRNA.EF-Tu.GTP complex up to the GTP hydrolysis stage on the ribosome. This chain is Elongation factor Ts, chloroplastic (tsf), found in Rhodomonas salina (Cryptomonas salina).